The following is a 101-amino-acid chain: Putative regulatory protein Csac_2087 (101 aa).

Belongs to the RemA family.

This Caldicellulosiruptor saccharolyticus (strain ATCC 43494 / DSM 8903 / Tp8T 6331) protein is Putative regulatory protein Csac_2087.